The chain runs to 545 residues: CTP synthase (545 aa).

Residues 1 to 266 are amidoligase domain; that stretch reads MTTNYIFVTG…DDYICKRFSL (266 aa). Serine 14 is a CTP binding site. Residue serine 14 participates in UTP binding. Residues 15–20 and aspartate 72 each bind ATP; that span reads SLGKGI. Positions 72 and 140 each coordinate Mg(2+). Residues 147–149, 187–192, and lysine 223 contribute to the CTP site; these read DIE and KTKPTQ. UTP is bound by residues 187-192 and lysine 223; that span reads KTKPTQ. An ATP-binding site is contributed by 239 to 241; sequence KDV. In terms of domain architecture, Glutamine amidotransferase type-1 spans 291–542; the sequence is TIGMVGKYIE…VKAASEYQKR (252 aa). Glycine 352 is a binding site for L-glutamine. The Nucleophile; for glutamine hydrolysis role is filled by cysteine 379. L-glutamine is bound by residues 380–383, glutamate 403, and arginine 470; that span reads LGMQ. Active-site residues include histidine 515 and glutamate 517.

Belongs to the CTP synthase family. In terms of assembly, homotetramer.

The catalysed reaction is UTP + L-glutamine + ATP + H2O = CTP + L-glutamate + ADP + phosphate + 2 H(+). It catalyses the reaction L-glutamine + H2O = L-glutamate + NH4(+). The enzyme catalyses UTP + NH4(+) + ATP = CTP + ADP + phosphate + 2 H(+). The protein operates within pyrimidine metabolism; CTP biosynthesis via de novo pathway; CTP from UDP: step 2/2. With respect to regulation, allosterically activated by GTP, when glutamine is the substrate; GTP has no effect on the reaction when ammonia is the substrate. The allosteric effector GTP functions by stabilizing the protein conformation that binds the tetrahedral intermediate(s) formed during glutamine hydrolysis. Inhibited by the product CTP, via allosteric rather than competitive inhibition. In terms of biological role, catalyzes the ATP-dependent amination of UTP to CTP with either L-glutamine or ammonia as the source of nitrogen. Regulates intracellular CTP levels through interactions with the four ribonucleotide triphosphates. This chain is CTP synthase, found in Enterobacter sp. (strain 638).